The following is a 626-amino-acid chain: MDYTHLLPYEIWLNIIDFLDKDKYNLYLTNTNFFSLLDYSREYFNLIDFIIETKSMEVLKYIYQSKTNGLIRNRFVKNITLNTSLLTSCQNGNILLVKFFIEKGANHRYSEDKPLGIAAANGHSDIVEYLVNGGANIKSRNNYALRFAVKNGHYNMVKFLIEQGVDITVFDYEVFYTSCEYGHYEIFVYLMKNINDIKKLNKKRLLKKAFKGGSVKIVHYIFNDILDVYRMFYHSMTRSELKNYKLLNIIGKYGNHDILEYLHNRYQLSDTNNIAQVAALYGHFRIVKFLLDKYLHELNLNQLIISACDNGSIKMVKFLIEKGIDINTIGNSCLSHAILSGNTDLLHYLTNIGCRLTSLENFFMKNLVSFYDIETINYLRNYITFDDQHYINTIMSTSMYCGIIKLVKYFVDKSSLDYESYICGIISNGHVNIIKYLLNQNKITKQNITITINNSVILTIIQYGHIDMLKYLVSLGINICINYALDRAVSYGHLNIVEYLLELGHNINEFGDLPLRSATIANNINMVKYLVSQGANIYIIKDNPIYLASIHGHVKLVKYFIDLGSDYHKKNELPLYVAIINNNLDVVKCLVEHGCKTKTTFFDPIETAMEYYNNEIVEYLQNNEIK.

ANK repeat units lie at residues Glu42–Arg72, Thr80–Tyr109, Ser110–Ser139, Arg140–Val169, Asp171–Lys199, Asn201–Arg230, Lys242–Ser269, Asp270–Leu298, Asn299–Thr328, Gly330–Ser358, Thr393–Leu416, Asp417–Gln446, Ile452–Ile479, Cys480–Glu509, Phe510–Ile539, Ile540–Lys569, Lys570–Thr599, and Phe601–Lys626.

This chain is Putative ankyrin repeat protein R837, found in Acanthamoeba polyphaga (Amoeba).